Reading from the N-terminus, the 38-residue chain is Large ribosomal subunit protein bL36 (38 aa).

The protein belongs to the bacterial ribosomal protein bL36 family.

This chain is Large ribosomal subunit protein bL36, found in Ralstonia nicotianae (strain ATCC BAA-1114 / GMI1000) (Ralstonia solanacearum).